The sequence spans 513 residues: 2-isopropylmalate synthase (513 aa).

One can recognise a Pyruvate carboxyltransferase domain in the interval 5–268; that stretch reads LIIFDTTLRD…DIGVDTTQIV (264 aa). Mn(2+) is bound by residues Asp14, His202, His204, and Asn239. The tract at residues 394 to 513 is regulatory domain; sequence RFISLSQRSE…KAVQKINPQI (120 aa).

It belongs to the alpha-IPM synthase/homocitrate synthase family. LeuA type 1 subfamily. In terms of assembly, homodimer. Mn(2+) is required as a cofactor.

Its subcellular location is the cytoplasm. It catalyses the reaction 3-methyl-2-oxobutanoate + acetyl-CoA + H2O = (2S)-2-isopropylmalate + CoA + H(+). It participates in amino-acid biosynthesis; L-leucine biosynthesis; L-leucine from 3-methyl-2-oxobutanoate: step 1/4. In terms of biological role, catalyzes the condensation of the acetyl group of acetyl-CoA with 3-methyl-2-oxobutanoate (2-ketoisovalerate) to form 3-carboxy-3-hydroxy-4-methylpentanoate (2-isopropylmalate). The sequence is that of 2-isopropylmalate synthase from Cupriavidus necator (strain ATCC 17699 / DSM 428 / KCTC 22496 / NCIMB 10442 / H16 / Stanier 337) (Ralstonia eutropha).